The chain runs to 577 residues: Zona pellucida sperm-binding protein 3 receptor (577 aa).

The N-terminal stretch at M1–G32 is a signal peptide. Sushi domains lie at D33–R92, K93–I154, A155–K219, I220–P279, N280–R346, and V347–A412. Intrachain disulfides connect C34–C78, C64–C90, C95–C136, C122–C152, C157–C200, C186–C217, C222–C264, C250–C277, C282–C332, C316–C344, C349–C397, and C382–C410. Residues N72 and N81 are each glycosylated (N-linked (GlcNAc...) asparagine). N144, N195, and N204 each carry an N-linked (GlcNAc...) asparagine glycan. A glycan (N-linked (GlcNAc...) asparagine) is linked at N335. 7 N-linked (GlcNAc...) asparagine glycosylation sites follow: N426, N431, N434, N443, N462, N475, and N497. Residues A451–M509 enclose the Sushi 7 domain. 2 disulfide bridges follow: C453/C494 and C480/C507.

Homomultimer; disulfide-linked. Glycosylated. Testis specific.

The protein localises to the cytoplasmic vesicle. The protein resides in the secretory vesicle. It is found in the acrosome lumen. Binds to ZP3 glycoprotein in egg zona pellucida. Probably involved in interactions between sperm acrosome and egg zona pellucida during and immediately following the acrosome reaction. This Rattus norvegicus (Rat) protein is Zona pellucida sperm-binding protein 3 receptor (Zp3r).